A 981-amino-acid polypeptide reads, in one-letter code: Mediator of RNA polymerase II transcription subunit 5 (981 aa).

This sequence belongs to the Mediator complex subunit 5 family. In terms of assembly, component of the Mediator complex.

The protein localises to the nucleus. In terms of biological role, component of the Mediator complex, a coactivator involved in the regulated transcription of nearly all RNA polymerase II-dependent genes. Mediator functions as a bridge to convey information from gene-specific regulatory proteins to the basal RNA polymerase II transcription machinery. Mediator is recruited to promoters by direct interactions with regulatory proteins and serves as a scaffold for the assembly of a functional preinitiation complex with RNA polymerase II and the general transcription factors. In Scheffersomyces stipitis (strain ATCC 58785 / CBS 6054 / NBRC 10063 / NRRL Y-11545) (Yeast), this protein is Mediator of RNA polymerase II transcription subunit 5 (NUT1).